The chain runs to 361 residues: Transposase A from transposon Tn554 (361 aa).

Residues 23–120 enclose the Core-binding (CB) domain; sequence YQLIEPVMKF…VVMSFLDYLS (98 aa). The region spanning 163–351 is the Tyr recombinase domain; it reads KQIRTLRSKE…SDQDMKNEFN (189 aa). Residues Arg198, Lys232, His302, Arg305, and His328 contribute to the active site. Tyr338 acts as the O-(3'-phospho-DNA)-tyrosine intermediate in catalysis.

Belongs to the 'phage' integrase family.

One of three proteins encoded by transposon Tn554 required for its transposition. The polypeptide is Transposase A from transposon Tn554 (tnpA1) (Staphylococcus aureus (strain Mu50 / ATCC 700699)).